Reading from the N-terminus, the 29-residue chain is Galanin (29 aa).

Position 29 is a threonine amide (threonine 29).

Belongs to the galanin family.

It is found in the secreted. In terms of biological role, contracts smooth muscle of the gastrointestinal and genitourinary tract, regulates growth hormone release, modulates insulin release, and may be involved in the control of adrenal secretion. This Gallus gallus (Chicken) protein is Galanin (GAL).